A 236-amino-acid chain; its full sequence is Probable calcium-binding protein CML30 (236 aa).

The disordered stretch occupies residues 43 to 64 (VVVVAKKRPEEEPRRPDPDADL). Positions 49-60 (KRPEEEPRRPDP) are enriched in basic and acidic residues. EF-hand domains follow at residues 59–94 (DPDA…LGIA) and 96–131 (SSAA…IPKR). Residues Asp72, Asp74, Asp76, Glu83, Asp109, Asn111, Asp113, and Glu120 each coordinate Ca(2+). Residues 130–158 (KRRKSHQQHPLPSTAAADEEAAAADEEYE) are disordered. Residues 146 to 158 (ADEEAAAADEEYE) are compositionally biased toward acidic residues. 2 EF-hand domains span residues 161–196 (EEER…LGLR) and 202–236 (PAVA…VVKA). Ca(2+) is bound by residues Asp174, Asn176, Asp178, Glu185, Asp215, Asp217, Asp219, Met221, and Glu226.

Its function is as follows. Potential calcium sensor. The sequence is that of Probable calcium-binding protein CML30 (CML30) from Oryza sativa subsp. japonica (Rice).